The sequence spans 181 residues: Inner membrane-spanning protein YciB (181 aa).

A run of 5 helical transmembrane segments spans residues 10–30 (LVIFFAVYKFFDIYIASGALI), 50–70 (MHLITFVMVTVFGSLTLILHD), 72–92 (SFIKWKVTIVYALFAIALGVS), 118–138 (VTWYWVSFFVVCGLVNIYVAF), and 148–168 (FKVFGLTALTLINTVLTVVYL).

It belongs to the YciB family.

The protein localises to the cell inner membrane. In terms of biological role, plays a role in cell envelope biogenesis, maintenance of cell envelope integrity and membrane homeostasis. In Shewanella pealeana (strain ATCC 700345 / ANG-SQ1), this protein is Inner membrane-spanning protein YciB.